We begin with the raw amino-acid sequence, 109 residues long: METRATLRGVRLSVDKGRLVADLIRGKKVDQALNILNFTQKKAAGIIKKVVESAIANAEHNDGADIDELRVKTIYVEQGATLKRFSARAKGRGNSISKPTCHVYVVVGN.

It belongs to the universal ribosomal protein uL22 family. Part of the 50S ribosomal subunit.

Its function is as follows. This protein binds specifically to 23S rRNA; its binding is stimulated by other ribosomal proteins, e.g. L4, L17, and L20. It is important during the early stages of 50S assembly. It makes multiple contacts with different domains of the 23S rRNA in the assembled 50S subunit and ribosome. Functionally, the globular domain of the protein is located near the polypeptide exit tunnel on the outside of the subunit, while an extended beta-hairpin is found that lines the wall of the exit tunnel in the center of the 70S ribosome. The chain is Large ribosomal subunit protein uL22 from Polaromonas naphthalenivorans (strain CJ2).